Here is a 202-residue protein sequence, read N- to C-terminus: CASP-like protein 2B1 (202 aa).

The Cytoplasmic segment spans residues 1-29; that stretch reads MSYLGVGVSPGNVPVYHGTNLKVVDRRVR. The chain crosses the membrane as a helical span at residues 30–50; sequence LAELVLRCVICGLGILAAVLV. Over 51-72 the chain is Extracellular; the sequence is GTDTQVKVIFTIQKKAKFTDMK. The chain crosses the membrane as a helical span at residues 73–93; sequence ALVFLVIANGIAAAYSLIQGL. Topologically, residues 94-109 are cytoplasmic; that stretch reads RCVVSMVRGSVLFSKP. The chain crosses the membrane as a helical span at residues 110 to 130; that stretch reads LAWAIFSGDQVIAYLTLAAVA. Residues 131 to 164 lie on the Extracellular side of the membrane; the sequence is AAAQSSVFGEFGQPELQWMKICNMYGKFCNQVGE. The chain crosses the membrane as a helical span at residues 165 to 185; sequence GIVSAVGVSLSMVILSGISAF. The Cytoplasmic segment spans residues 186 to 202; it reads SLFRLYGGNKGTSGGRW.

Belongs to the Casparian strip membrane proteins (CASP) family. As to quaternary structure, homodimer and heterodimers.

Its subcellular location is the cell membrane. In Vitis vinifera (Grape), this protein is CASP-like protein 2B1.